A 434-amino-acid chain; its full sequence is Isocitrate lyase (434 aa).

Serine 91 to tryptophan 93 contributes to the substrate binding site. Aspartate 157 provides a ligand contact to Mg(2+). Residue cysteine 195 is the Proton acceptor of the active site. Substrate-binding positions include glycine 196–histidine 197, arginine 232, asparagine 317–serine 321, and threonine 351.

The protein belongs to the isocitrate lyase/PEP mutase superfamily. Isocitrate lyase family. In terms of assembly, homotetramer. The cofactor is Mg(2+).

The enzyme catalyses D-threo-isocitrate = glyoxylate + succinate. It functions in the pathway carbohydrate metabolism; glyoxylate cycle; (S)-malate from isocitrate: step 1/2. Functionally, involved in the metabolic adaptation in response to environmental changes. Catalyzes the reversible formation of succinate and glyoxylate from isocitrate, a key step of the glyoxylate cycle, which operates as an anaplerotic route for replenishing the tricarboxylic acid cycle during growth on fatty acid substrates. This Escherichia coli O6:H1 (strain CFT073 / ATCC 700928 / UPEC) protein is Isocitrate lyase (aceA).